A 108-amino-acid chain; its full sequence is V-type proton ATPase subunit G (108 aa).

The segment covering 48–60 has biased composition (basic and acidic residues); that stretch reads YASKKEEEFKKSE. Positions 48–89 are disordered; the sequence is YASKKEEEFKKSESQASGIYSQAEAESKKQVQDTFASIETSS. Positions 79–89 are enriched in polar residues; sequence QDTFASIETSS.

The protein belongs to the V-ATPase G subunit family. In terms of assembly, V-ATPase is a heteromultimeric enzyme composed of a peripheral catalytic V1 complex (components A to H) attached to an integral membrane V0 proton pore complex (components: a, c, c', c'', d, e, f and VOA1).

Its subcellular location is the vacuole membrane. Functionally, subunit of the V1 complex of vacuolar(H+)-ATPase (V-ATPase), a multisubunit enzyme composed of a peripheral complex (V1) that hydrolyzes ATP and a membrane integral complex (V0) that translocates protons. V-ATPase is responsible for acidifying and maintaining the pH of intracellular compartments. The chain is V-type proton ATPase subunit G (vma10) from Schizosaccharomyces pombe (strain 972 / ATCC 24843) (Fission yeast).